A 99-amino-acid polypeptide reads, in one-letter code: Acylphosphatase-1 (99 aa).

A2 is modified (N-acetylalanine). The Acylphosphatase-like domain occupies 9-99 (SVDYEVSGRV…LEHTDFQIRK (91 aa)). Catalysis depends on residues R24 and N42.

This sequence belongs to the acylphosphatase family. In terms of tissue distribution, organ-common type isozyme is found in many different tissues.

The enzyme catalyses an acyl phosphate + H2O = a carboxylate + phosphate + H(+). The chain is Acylphosphatase-1 (ACYP1) from Gallus gallus (Chicken).